The following is a 299-amino-acid chain: Oxygen-dependent coproporphyrinogen-III oxidase (299 aa).

Residue S92 participates in substrate binding. 2 residues coordinate Mn(2+): H96 and H106. Catalysis depends on H106, which acts as the Proton donor. 108–110 (NVR) serves as a coordination point for substrate. Mn(2+)-binding residues include H145 and H175. Residues 240–275 (YVEFNLVWDRGTLFGLQTGGRTESILMSMPPLVRWE) are important for dimerization. 258–260 (GGR) lines the substrate pocket.

It belongs to the aerobic coproporphyrinogen-III oxidase family. Homodimer. Mn(2+) is required as a cofactor.

It localises to the cytoplasm. The enzyme catalyses coproporphyrinogen III + O2 + 2 H(+) = protoporphyrinogen IX + 2 CO2 + 2 H2O. It participates in porphyrin-containing compound metabolism; protoporphyrin-IX biosynthesis; protoporphyrinogen-IX from coproporphyrinogen-III (O2 route): step 1/1. Its function is as follows. Involved in the heme biosynthesis. Catalyzes the aerobic oxidative decarboxylation of propionate groups of rings A and B of coproporphyrinogen-III to yield the vinyl groups in protoporphyrinogen-IX. The polypeptide is Oxygen-dependent coproporphyrinogen-III oxidase (Escherichia coli O7:K1 (strain IAI39 / ExPEC)).